A 151-amino-acid polypeptide reads, in one-letter code: Nucleoside diphosphate kinase (151 aa).

ATP is bound by residues Lys9, Phe57, Arg86, Thr92, Arg103, and Asn113. Catalysis depends on His116, which acts as the Pros-phosphohistidine intermediate.

The protein belongs to the NDK family. As to quaternary structure, homotetramer. Mg(2+) is required as a cofactor.

It localises to the cytoplasm. It carries out the reaction a 2'-deoxyribonucleoside 5'-diphosphate + ATP = a 2'-deoxyribonucleoside 5'-triphosphate + ADP. It catalyses the reaction a ribonucleoside 5'-diphosphate + ATP = a ribonucleoside 5'-triphosphate + ADP. Functionally, major role in the synthesis of nucleoside triphosphates other than ATP. The ATP gamma phosphate is transferred to the NDP beta phosphate via a ping-pong mechanism, using a phosphorylated active-site intermediate. This is Nucleoside diphosphate kinase from Chloroflexus aggregans (strain MD-66 / DSM 9485).